Here is a 242-residue protein sequence, read N- to C-terminus: MPKPTARRLNWFRVITAVIMAVLCIAILYQLWMFSLVVWYAYRDPGSSAIMRQELARLRERDPEAELKYQWVPYDRISNTLKQAVVASEDANFTEHDGVEWDAIRKAWEYNQRQAERGRTKMRGGSTITQQLAKNLFLSGSRSYLRKGQELVLAYMIEHVMPKERILELYLNVAEWGVGVFGAEAAARHYYNTSAARLGAGQAARLAAMLPNPRYYDRHRNTGYLNSRTATLTRRMRMVEIP.

The chain crosses the membrane as a helical span at residues 18–38 (VIMAVLCIAILYQLWMFSLVV).

It belongs to the glycosyltransferase 51 family.

Its subcellular location is the cell inner membrane. The catalysed reaction is [GlcNAc-(1-&gt;4)-Mur2Ac(oyl-L-Ala-gamma-D-Glu-L-Lys-D-Ala-D-Ala)](n)-di-trans,octa-cis-undecaprenyl diphosphate + beta-D-GlcNAc-(1-&gt;4)-Mur2Ac(oyl-L-Ala-gamma-D-Glu-L-Lys-D-Ala-D-Ala)-di-trans,octa-cis-undecaprenyl diphosphate = [GlcNAc-(1-&gt;4)-Mur2Ac(oyl-L-Ala-gamma-D-Glu-L-Lys-D-Ala-D-Ala)](n+1)-di-trans,octa-cis-undecaprenyl diphosphate + di-trans,octa-cis-undecaprenyl diphosphate + H(+). Its pathway is cell wall biogenesis; peptidoglycan biosynthesis. Peptidoglycan polymerase that catalyzes glycan chain elongation from lipid-linked precursors. This Bordetella bronchiseptica (strain ATCC BAA-588 / NCTC 13252 / RB50) (Alcaligenes bronchisepticus) protein is Biosynthetic peptidoglycan transglycosylase.